A 136-amino-acid chain; its full sequence is Small ribosomal subunit protein uS19 (136 aa).

Residues 114-136 (RSRVSHGSAGVGATRSSKFVPLK) are disordered.

The protein belongs to the universal ribosomal protein uS19 family.

Functionally, protein S19 forms a complex with S13 that binds strongly to the 16S ribosomal RNA. This is Small ribosomal subunit protein uS19 from Methanosarcina barkeri (strain Fusaro / DSM 804).